Reading from the N-terminus, the 205-residue chain is HTH-type transcriptional repressor KstR2 (205 aa).

Residues 10–70 (ASRRDELLQL…EVLRDFLDWL (61 aa)) form the HTH tetR-type domain. Positions 33–52 (TVRDIADSAGILSGSLYHHF) form a DNA-binding region, H-T-H motif.

Homodimer.

Controls the expression of a small regulon that may play a role in the utilization of cholesterol. In Mycolicibacterium smegmatis (strain ATCC 700084 / mc(2)155) (Mycobacterium smegmatis), this protein is HTH-type transcriptional repressor KstR2 (kstR2).